A 449-amino-acid chain; its full sequence is Histidinol dehydrogenase (449 aa).

Residues Tyr-136, Gln-204, and Asn-232 each contribute to the NAD(+) site. Substrate-binding residues include Thr-255, Gln-277, and His-280. Gln-277 and His-280 together coordinate Zn(2+). Active-site proton acceptor residues include Glu-346 and His-347. Residues His-347, Asp-380, Glu-434, and His-439 each coordinate substrate. Residue Asp-380 coordinates Zn(2+). A Zn(2+)-binding site is contributed by His-439.

It belongs to the histidinol dehydrogenase family. The cofactor is Zn(2+).

The catalysed reaction is L-histidinol + 2 NAD(+) + H2O = L-histidine + 2 NADH + 3 H(+). It participates in amino-acid biosynthesis; L-histidine biosynthesis; L-histidine from 5-phospho-alpha-D-ribose 1-diphosphate: step 9/9. Catalyzes the sequential NAD-dependent oxidations of L-histidinol to L-histidinaldehyde and then to L-histidine. In Mycobacterium leprae (strain TN), this protein is Histidinol dehydrogenase (hisD).